Consider the following 370-residue polypeptide: Putative agmatine deiminase (370 aa).

Residue C361 is the Amidino-cysteine intermediate of the active site.

It belongs to the agmatine deiminase family.

The catalysed reaction is agmatine + H2O = N-carbamoylputrescine + NH4(+). The polypeptide is Putative agmatine deiminase (Shewanella baltica (strain OS195)).